The chain runs to 479 residues: 3-phytase B (479 aa).

The first 19 residues, 1–19 (MPRTSLLTLACALATGASA), serve as a signal peptide directing secretion. 5 disulfides stabilise this stretch: Cys-71/Cys-387, Cys-128/Cys-472, Cys-216/Cys-441, Cys-225/Cys-298, and Cys-413/Cys-421. His-82 (nucleophile) is an active-site residue. N-linked (GlcNAc...) asparagine glycosylation is present at Asn-191. Residue Asn-315 is glycosylated (N-linked (GlcNAc...) asparagine). The active-site Proton donor is Asp-338. Asn-458 carries an N-linked (GlcNAc...) asparagine glycan.

It belongs to the histidine acid phosphatase family. In terms of assembly, homodimer.

It catalyses the reaction 1D-myo-inositol hexakisphosphate + H2O = 1D-myo-inositol 1,2,4,5,6-pentakisphosphate + phosphate. Functionally, catalyzes the hydrolysis of inorganic orthophosphate from phytate. This Aspergillus awamori (Black koji mold) protein is 3-phytase B (phyB).